A 351-amino-acid polypeptide reads, in one-letter code: Secreted frizzled-related sequence protein 4 (351 aa).

The first 18 residues, 1-18 (MLRSILVALCLWLRLALG), serve as a signal peptide directing secretion. One can recognise an FZ domain in the interval 19–139 (VRGAPCEAVR…VYDRGVCISP (121 aa)). 5 disulfide bridges follow: Cys24/Cys85, Cys32/Cys78, Cys69/Cys108, Cys97/Cys136, and Cys101/Cys125. N-linked (GlcNAc...) asparagine glycosylation is found at Asn38 and Asn68. N-linked (GlcNAc...) asparagine glycosylation is found at Asn116, Asn194, and Asn240. The region spanning 178-306 (CKCKKVKPTL…TIQDKKQIAS (129 aa)) is the NTR domain. Basic and acidic residues predominate over residues 293–303 (EQQRTIQDKKQ). The interval 293–351 (EQQRTIQDKKQIASRTSRTSRSNPPKSKGRPPAPKPASPKKNIKARSAPKKSNLKKSAS) is disordered. Positions 306 to 318 (SRTSRTSRSNPPK) are enriched in low complexity. A compositionally biased stretch (basic residues) spans 333-351 (KNIKARSAPKKSNLKKSAS).

It belongs to the secreted frizzled-related protein (sFRP) family. In terms of tissue distribution, expressed in the ovary. Localized to granulosa cells of periovulatory follicles and corpora lutea. Weakly expressed in adult tissues including kidney, brain and lung.

Its subcellular location is the secreted. Soluble frizzled-related proteins (sFRPS) function as modulators of Wnt signaling through direct interaction with Wnts. They have a role in regulating cell growth and differentiation in specific cell types. SFRP4 plays a role in bone morphogenesis. May also act as a regulator of adult uterine morphology and function. May also increase apoptosis during ovulation possibly through modulation of FZ1/FZ4/WNT4 signaling. Has phosphaturic effects by specifically inhibiting sodium-dependent phosphate uptake. This is Secreted frizzled-related sequence protein 4 (Sfrp4) from Mus musculus (Mouse).